A 357-amino-acid chain; its full sequence is Putative ankyrin repeat protein L42 (357 aa).

ANK repeat units follow at residues S34–F63, E86–M115, N116–A145, N147–S175, K176–V205, G206–K235, S237–I265, Y267–D294, and N301–K331.

The polypeptide is Putative ankyrin repeat protein L42 (Acanthamoeba polyphaga (Amoeba)).